Reading from the N-terminus, the 235-residue chain is Carboxy-S-adenosyl-L-methionine synthase (235 aa).

Residues Y35, 60-62, 83-84, N124, and R191 contribute to the S-adenosyl-L-methionine site; these read GCS and DN.

It belongs to the class I-like SAM-binding methyltransferase superfamily. Cx-SAM synthase family. In terms of assembly, homodimer.

It carries out the reaction prephenate + S-adenosyl-L-methionine = carboxy-S-adenosyl-L-methionine + 3-phenylpyruvate + H2O. Functionally, catalyzes the conversion of S-adenosyl-L-methionine (SAM) to carboxy-S-adenosyl-L-methionine (Cx-SAM). In Campylobacter jejuni subsp. jejuni serotype O:2 (strain ATCC 700819 / NCTC 11168), this protein is Carboxy-S-adenosyl-L-methionine synthase.